The following is a 455-amino-acid chain: Peroxisomal membrane protein PEX3 (455 aa).

Positions 113–125 (TVLSDDFSTSQEG) are enriched in polar residues. Residues 113–135 (TVLSDDFSTSQEGAISEDTNKPP) are disordered. A helical transmembrane segment spans residues 155–171 (FLTLIYCESLLIVFLHL).

The protein belongs to the peroxin-3 family. In terms of assembly, component of the peroxisomal docking complex, composed of at least PEX3, PEX13, PEX14 and PEX17. Component of the peroxisomal translocation complex, composed of at least PEX3, PEX2, PEX10 and PEX12. Interacts with PEX19. Interacts with the pexophagy receptor ATG30.

The protein resides in the peroxisome membrane. Peroxisomal membrane protein required for peroxisome biosynthesis. Shared component of both the peroxisomal docking complex and the peroxisomal translocation complex. The two types of peroxisomal matrix targeting signals, PTS1 and PTS2, are first recognized in the cytosol by their receptors PEX5 and PEX7, respectively, which then carry the cargo to the peroxisomal membrane. The peroxisomal targeting signal (PTS) receptor-cargo complexes interact with peroxisomal membrane protein (PMP) components of the docking complex. They have then additional downstream interactions with the translocation complex, leading to the transport of fully folded and oligomerized cargo into the peroxisome matrix. PEX3 acts as an anchoring site for PEX19 on the peroxisomal membrane and thus plays a crucial role in the assembly of the peroxisomal translocation complex. Is also essential for the interaction between the two complexes. Finally. PEX3 activates selective autophagy of peroxisomes (pexophagy) via interaction with the pexophagy receptor ATG30. In Komagataella pastoris (Yeast), this protein is Peroxisomal membrane protein PEX3.